A 79-amino-acid chain; its full sequence is Acyl carrier protein 1 (79 aa).

Residues 2 to 77 (DNIEQRVKKI…QAIDYARANV (76 aa)) form the Carrier domain. The residue at position 37 (serine 37) is an O-(pantetheine 4'-phosphoryl)serine.

This sequence belongs to the acyl carrier protein (ACP) family. Post-translationally, 4'-phosphopantetheine is transferred from CoA to a specific serine of apo-ACP by AcpS. This modification is essential for activity because fatty acids are bound in thioester linkage to the sulfhydryl of the prosthetic group.

It localises to the cytoplasm. The protein operates within lipid metabolism; fatty acid biosynthesis. Carrier of the growing fatty acid chain in fatty acid biosynthesis. This chain is Acyl carrier protein 1, found in Ralstonia nicotianae (strain ATCC BAA-1114 / GMI1000) (Ralstonia solanacearum).